A 136-amino-acid chain; its full sequence is uncharacterized protein (136 aa).

This is an uncharacterized protein from Fowl adenovirus A serotype 1 (strain CELO / Phelps) (FAdV-1).